The chain runs to 517 residues: Cytochrome P450 78A5 (517 aa).

A helical membrane pass occupies residues 20 to 40; the sequence is AFASVSLIIATVAFLLSPGGL. C459 contributes to the heme binding site.

Belongs to the cytochrome P450 family. Heme serves as cofactor. In terms of tissue distribution, expressed in the periphery of the shoot apical meristem and inflorescence meristem, on the adaxial sides of developing floral organs and in developing ovules in the region where the integuments emerge.

The protein localises to the membrane. Its function is as follows. Plays a role in regulating directional growth at the meristem/organ boundary. Is required for the promotion of leaf and floral organ growth and for the prolongation of the plastochron. Promotes organ growth in a non-cell-autonomous manner and may generate a mobile growth signal distinct from the classical phytohormones that prevents premature arrest of proliferation, until the correct primordium size has been reached. Functions probably in association with CYP78A7 in regulating relative growth of the shoot apical meristem and plant organs. Is required locally in developing ovules to stimulates cell proliferation and promote seed growth. This is Cytochrome P450 78A5 (CYP78A5) from Arabidopsis thaliana (Mouse-ear cress).